A 430-amino-acid chain; its full sequence is Lipoyl synthase, mitochondrial (430 aa).

Residues 1-37 (MAASTGKLRTLFSAHSSLSARPSSALPALRLTILRSY) constitute a mitochondrion transit peptide. Low complexity predominate over residues 40–56 (TTPPDSSISDPSNSSTT). Residues 40-63 (TTPPDSSISDPSNSSTTVKRPPTA) are disordered. [4Fe-4S] cluster-binding residues include C141, C146, C152, C172, C176, C179, and S387. The Radical SAM core domain occupies 155–376 (GSSKSAATAT…KERALEMGFL (222 aa)).

This sequence belongs to the radical SAM superfamily. Lipoyl synthase family. It depends on [4Fe-4S] cluster as a cofactor.

The protein localises to the mitochondrion. The catalysed reaction is [[Fe-S] cluster scaffold protein carrying a second [4Fe-4S](2+) cluster] + N(6)-octanoyl-L-lysyl-[protein] + 2 oxidized [2Fe-2S]-[ferredoxin] + 2 S-adenosyl-L-methionine + 4 H(+) = [[Fe-S] cluster scaffold protein] + N(6)-[(R)-dihydrolipoyl]-L-lysyl-[protein] + 4 Fe(3+) + 2 hydrogen sulfide + 2 5'-deoxyadenosine + 2 L-methionine + 2 reduced [2Fe-2S]-[ferredoxin]. It functions in the pathway protein modification; protein lipoylation via endogenous pathway; protein N(6)-(lipoyl)lysine from octanoyl-[acyl-carrier-protein]: step 2/2. Functionally, catalyzes the radical-mediated insertion of two sulfur atoms into the C-6 and C-8 positions of the octanoyl moiety bound to the lipoyl domains of lipoate-dependent enzymes, thereby converting the octanoylated domains into lipoylated derivatives. The protein is Lipoyl synthase, mitochondrial of Ajellomyces dermatitidis (strain ER-3 / ATCC MYA-2586) (Blastomyces dermatitidis).